The following is a 4367-amino-acid chain: MKKTRTTAAERSQRARKRPHDEHRGRGREHGGARDPGAGGQAMKGAEKGRNPKHQATQKQMSFLQGKHQQRVGNVVSRLGPAAVGQTTLMDKKRKLYSDTSQQPLWSLRKITINPTDKDDLRRFPSNAIYTHRYSAMTFIFKNLWEQFHRVINWWFLVMAIIQAIPQLHYNPNHAWSTALPFAIVLVFGMLKDAFTDLGRRERDRVLNQRVCCIVDGHTPQLRLLQWQGVRVGNILRLTDGEEVPADIVVLATSNTDGVAYVETSKLDGETNLKFKQGVKETRGESSPLSIAGIRGRVVCEKPCAVMDAFTGSLKLDAHPRATPLDIVNFIQRGSHIRNTEWLYGVVIYTGEDTRIQKNAAPPGFKRPHIEKDINTYLFISFFIVFLTILISVMSKWSVQERDSGDTGVTDAGASSGSGSSSGETSQTYGSSVEFMLGSRDLLQNPWMSILRFLAVYAPVLPLSLPLILDVVYLLQSVLIEGDIHIRGGGRTPATGRGNGSTSSMTVADDGLPDGEAGGLDSAHSSQNASLQQPLSIVSKGFSKTRRFLSEKFSSPSSGQIGGNQDRRETPREDDERETNGENVPSATPLLPGGEAACVATGDEETLRADAEGAQERDREAEGNREQLKSVPTGTHAAWRPGALDSTAEANEDEDPDVLHAEKASGFGARRSDDRDRKSSCSRYPETGGEKTSHAISGRFTGSVMPSTYTKLHGDIANAGFESAWQPYANGHTHTRTLLLATGGGPNSLCATGNFEREDVWAEVHTPALNPNLGQVDFIFTDKTGTITENDMTFSMCSVAGKIYGMASCGGAGYEGAESSEYGSRVWTANETSARSSRDRLVPHLQRGTSAASSRSQSAPASANDEGTPRRIPTLMLRPQTLTNQQTGQQSPVLPASREDEKGKDASPGAADSPASSLSVSRFFGSVSYEGRLEETGSQKEEDSRSDRVSLSPSEGRVSGSRPQLACEGIHGATLRRRTVGIQSQHSSQSLLSSRQQSEDERQYTEGEEGETEDDRSTVSRRGRDRMYSRDYHRESRSSSPRDGELSDRYPLRCIRSIGDGYIIRGGRTGNVVMRHPSGMSFDSRPSSQFTFSSPVVGDDSFDDPRRAMYFGRGSPRSLTPPSERGTASPSVGEEGPPLSPQISPTGSARGRVPRSSSLYMPAVDEGEDRERYFRPRRRMLRPGASLLPPLSPSPSRAGVPFLYDNIDFPTGFRETPMEGQIRRNCDFYDASIFTDLARKDLRSHRINEFIKCMALCNTVVPWVYTATPCSSSCPGLPSTANFSVAAYPTGGGANSLFSCSASAFAGPVTQGFPSVTHPAALASDGAAGADEDEEKNVSQLLLPSGTSASSGAPSGPRGDPQLVSLLGRQGQGHGSLGAPGSGLPTSGCLGGAGGSGARGPMGLHGSRRSLPGSSDCRVPSTARPAPLLGSDAAGRGFGPDYVPSPRPLSPAGPPNASTGSLGEAPKADKPASPEEAASPGKDGEEAPSSTPRCVFAPSTLVPPSVLRSHTGAGGLRPSKSLARGVSFKEKHEEFAFSKDEDTATVDQDDTQSATDEEHDVEGEEEEAGKSAERLTKAKRNRSASASLMSLKSKVTASGRDVADLLFRRGSRGNSGTDPDPASARTVGRSSSVERAQQPPTHGGFSTVTGTGESRSSLVSIIKYQASSPDEECLVSAASHMGYTLVSRTNNYAILNINGQERRWQIIGVNEFTQKRGRMSIVVRPQEWTEGSILYVKGADVAMLDLLSTSFTRGHDFRQSFSCLSRYAESFSGGRGPQVSLSRLQSNSSAKGSGGPPVRRSVSGSDPRLQPSRSVSLPRTVPPGQETPMAGDQLEGPEAAETVNPSGQTYSQGEEEEGLRSRLARADSMLRSLNPALYNYDKQHQRGHGPEGDEGSHELEGHDAHTGDSHGGHHRDQAEPRAGDAVGPESASRLPQKTQNRLPQHLGNAGVCAHGHAWTPSEENYCAAFFDDDEDELIALGDIALVEQHLKRFSLQGLRTMALACRYLTQEETETYKRLYTDACASVYCRAERLEEVAEDMERDLEYLGITGVRDKLQEQVPETLQLMMEAGIRVWMVTGDNVEYALHICHSCRLLTSRTRIFHAALEFSGRKAKREGVMLYELFRKARRLKRSDEHICLVVTGPNLRTFLNHPDLQTYFLNMACCSDVVVAARVTPSQKAEMVRLVKKRLTPQPITMAVGDGGNDVAMLQEAHVGVAIRGKDSAAAVAAAYADYSFTEFRFLQRLLFVHGRLSLMRVSTVILWSFFKSLCIGLPTFLFQPQAFWSAVEVYDPLLLMIVDFFWTTLPGIIHGYSDQDLPTHLLPSVPVLYTPGRRRLYFNGFRFILWTVEGIIYSFLIFYLLQATWMDGNTFHDGQVLGFHSYGILLLFGSLLQSNVRIILETSLWTPTFLFTTIVLCTIMFFPTVLLYSVTGWPRRYMELAGRVVFAWPMLYFLIPLWVSIGILVQLLLQVFTSSLFPNISGSVKQYLAQKQADVNYRRKASKHPFSQPRPRLLPGGHDEYGLFCGMGSCWSLFKRSLWFMGGCCLMDTPNVADDFTASPALCAELRERFNPLRRKSVADRLPPPRRFRINENFLSYTGASEEKGADGVQRDLGGKGSACGPGAAGLAAGTGAPGAGRSKSVFGGGGGVMPMADMAADLETENSLSSNGSEQEKAGDNVTKLVKVSHLINRFTLRFKDMQLEADYQIHNKKSFLKRLVPWYRVIFMLIALYQLLSFLTEYFIDIHWNPGETEMEPWMCVPTLVVEIGFAAVVVCTFYDFIFLDHFSLILNSIVFLMVSSSIVFYTASHVDGTLTSVLFPVFTFVILRISFLQAVVWNILFLIVTVARFMLDKKYLPPLNFVHYIPLFIGIDVFVAFVGYRLEYNQRKSFLLDYSVDASRRKQREILNTMLPSFVVDQMINSELNEEGIPTSLKAEDRGTVSVIFCDVYEFQHVVASIEPTRLVEVLDSLFLCFDRSAEQFGCTKIETVFETYLAAAGLQPGREASPASYQQDACDALDMALAMLEVAAQIRYEVKSNQGVLSGSAVGSSSAVGPAVSASNLEASGNHMEPRLSLHGHNSGVAMGSRMNSSRFHRQKTGSVVRTVLQSRPQRIRVKIGIHSGRVISGVVGAKKPQYALFGDTVNTASRMKTTGQPGYIHISEDSYELVKGDDTLEYESRHTEVKGKGLMNTYLLVRVKGSPYPHFDDQEADEGDVISETGGQNGESRRSTASLPRQLETAGASSGVHTGEAMGCFASVGSRGESQTAADAAAAEAIEEDIQVEIDEEGVVEDTVEKAVEDVRRLRNEGSHAVASDDFPVSQAGAAQPRRCSRFLFQNAEEHGAAEPQRGEGARLILSPGQTEGTRQSEKEGSALGSNIAASARADRRPAGRREDSRGDSRFDYESMTTQQLLRIYRRQQKVAKVLQWIDEELRGQRDTAHRHARTADIVAKLLASSGDEQAAGESSEADHDEVPLDEIKEELRRQAREANEQESAKRSGGDAPPHTPTRKALLKAFRSEIVHGCAAPTEEEKTAKEGRESEVALASPETESRDANGQRVSERDASDAREGSASPQPDHAAPPSGLPQGLKGQETEKQQGWKLFRSASLVRAAGQSFASLFRRRKPAAPSEAASPSSADTPMDSRVSPTSVDDEDLEQNRVTRIGVSSEWLLLKFKDKNLEARYRTHFYNNKSNINTIEQALIIFLVTFCVQTLTRLALPRFYVVCSHHTINLHVCTGLYWAVRATYTLAAFVLWMLFHYRNRKEVATCLELRWMVFLLNLLFISASCVFALSNSWGVCGQQQEDHGASETAVENTLVALSHLAKDGSFPADDAEVNSVAGSPLAQAMHSPFTTAGVSRASRMLRSGGVSVSGGTDCTGVGTSGEEGSDLVTANGRAYTYWLLSDTIELFFYIVILHHNTGLLFQNCILVDVLLMTMSLTFIITTARETASTVSTIATFPCYVFFNLVSAYCKEYIDRLTFYVNEHAKTTESRATQLLNDMLPKQVLEEFQQDKLKLAYLHENVTFLFADICGFTSWAKGVDACEVVTMLQKLFAKFDKDSTKFGLYKLCTIGDAYVAVSEPVTAENAQDTDPREGMWLVYEMAKAMIGNITEVRERLCIPNLNMRIGLHYGSCVGGVIGSGRLRYDLWGMDVLTGNMMESNGVPGKINVSEILKNEMEKGFPGEFVFKFNKTVAVLQSTVDSYLIRPAKDFDEDEELAAAAATMAVAGPSASLQQGGGAIPQVQAVASGLRRDATSIRGNYRRRFTILGSAPRVLGRRQSLRGHQFSALALASHGDSGPSDEPRHLGDEGQAAGSVTSHDGPLREEVEDDEIDGLKQLRKEIERAGGLGLDASPSDIGSTPGSALGS.

Polar residues predominate over residues 1 to 10; the sequence is MKKTRTTAAE. The interval 1–70 is disordered; it reads MKKTRTTAAE…MSFLQGKHQQ (70 aa). Topologically, residues 1-150 are cytoplasmic; it reads MKKTRTTAAE…FKNLWEQFHR (150 aa). Positions 19–33 are enriched in basic and acidic residues; that stretch reads PHDEHRGRGREHGGA. Polar residues predominate over residues 54 to 63; sequence HQATQKQMSF. A helical transmembrane segment spans residues 151-171; it reads VINWWFLVMAIIQAIPQLHYN. At 172 to 174 the chain is on the extracellular side; the sequence is PNH. A helical transmembrane segment spans residues 175–195; it reads AWSTALPFAIVLVFGMLKDAF. Residues 196–373 are Cytoplasmic-facing; it reads TDLGRRERDR…GFKRPHIEKD (178 aa). The helical transmembrane segment at 374–394 threads the bilayer; it reads INTYLFISFFIVFLTILISVM. Residues 395-452 lie on the Extracellular side of the membrane; sequence SKWSVQERDSGDTGVTDAGASSGSGSSSGETSQTYGSSVEFMLGSRDLLQNPWMSILR. The segment at 402-426 is disordered; the sequence is RDSGDTGVTDAGASSGSGSSSGETS. Over residues 407-426 the composition is skewed to low complexity; the sequence is TGVTDAGASSGSGSSSGETS. A helical transmembrane segment spans residues 453 to 473; that stretch reads FLAVYAPVLPLSLPLILDVVY. Residues 474–2258 are Cytoplasmic-facing; it reads LLQSVLIEGD…VHGRLSLMRV (1785 aa). Disordered stretches follow at residues 486–535, 550–699, 831–918, 932–966, 980–1047, 1079–1164, 1344–1593, 1607–1652, 1773–1861, and 1881–1946; these read IRGG…QQPL, SEKF…ISGR, ETSA…ASSL, RLEETGSQKEEDSRSDRVSLSPSEGRVSGSRPQLA, VGIQ…GELS, GMSF…MPAV, PSGT…SLKS, FRRG…TGTG, GGRG…GLRS, and DKQH…PQHL. Over residues 523–535 the composition is skewed to polar residues; that stretch reads AHSSQNASLQQPL. Composition is skewed to basic and acidic residues over residues 605–628 and 670–679; these read ETLRADAEGAQERDREAEGNREQL and RRSDDRDRKS. Residues 850–863 show a composition bias toward low complexity; that stretch reads SAASSRSQSAPASA. Polar residues predominate over residues 880 to 892; that stretch reads QTLTNQQTGQQSP. The span at 906–917 shows a compositional bias: low complexity; it reads ASPGAADSPASS. Residues 932-948 show a composition bias toward basic and acidic residues; the sequence is RLEETGSQKEEDSRSDR. Over residues 983–996 the composition is skewed to low complexity; sequence QSQHSSQSLLSSRQ. A compositionally biased stretch (basic and acidic residues) spans 1025-1047; the sequence is DRMYSRDYHRESRSSSPRDGELS. Composition is skewed to polar residues over residues 1084–1094 and 1117–1130; these read SRPSSQFTFSS and RSLTPPSERGTASP. A compositionally biased stretch (low complexity) spans 1344 to 1357; it reads PSGTSASSGAPSGP. Composition is skewed to gly residues over residues 1370–1381 and 1389–1400; these read QGQGHGSLGAPG and CLGGAGGSGARG. A compositionally biased stretch (pro residues) spans 1443–1454; sequence VPSPRPLSPAGP. The segment covering 1527 to 1542 has biased composition (basic and acidic residues); that stretch reads SFKEKHEEFAFSKDED. Over residues 1543–1567 the composition is skewed to acidic residues; it reads TATVDQDDTQSATDEEHDVEGEEEE. The segment covering 1583-1593 has biased composition (low complexity); it reads SASASLMSLKS. 3 stretches are compositionally biased toward polar residues: residues 1628–1652, 1779–1791, and 1843–1852; these read GRSSSVERAQQPPTHGGFSTVTGTG, VSLSRLQSNSSAK, and VNPSGQTYSQ. Positions 1881-1922 are enriched in basic and acidic residues; the sequence is DKQHQRGHGPEGDEGSHELEGHDAHTGDSHGGHHRDQAEPRA. Residues 1933–1942 show a composition bias toward polar residues; it reads RLPQKTQNRL. The chain crosses the membrane as a helical span at residues 2259–2279; it reads STVILWSFFKSLCIGLPTFLF. Over 2280-2289 the chain is Extracellular; it reads QPQAFWSAVE. A helical membrane pass occupies residues 2290 to 2310; it reads VYDPLLLMIVDFFWTTLPGII. The Cytoplasmic portion of the chain corresponds to 2311–2343; that stretch reads HGYSDQDLPTHLLPSVPVLYTPGRRRLYFNGFR. The helical transmembrane segment at 2344 to 2364 threads the bilayer; the sequence is FILWTVEGIIYSFLIFYLLQA. Over 2365–2376 the chain is Extracellular; it reads TWMDGNTFHDGQ. The helical transmembrane segment at 2377-2397 threads the bilayer; it reads VLGFHSYGILLLFGSLLQSNV. The Cytoplasmic segment spans residues 2398–2408; it reads RIILETSLWTP. A helical transmembrane segment spans residues 2409–2429; sequence TFLFTTIVLCTIMFFPTVLLY. At 2430–2444 the chain is on the extracellular side; the sequence is SVTGWPRRYMELAGR. A helical transmembrane segment spans residues 2445 to 2465; it reads VVFAWPMLYFLIPLWVSIGIL. Over 2466–2724 the chain is Cytoplasmic; that stretch reads VQLLLQVFTS…LKRLVPWYRV (259 aa). Residues 2725 to 2745 traverse the membrane as a helical segment; sequence IFMLIALYQLLSFLTEYFIDI. The Extracellular portion of the chain corresponds to 2746-2762; the sequence is HWNPGETEMEPWMCVPT. Residues 2763-2783 form a helical membrane-spanning segment; sequence LVVEIGFAAVVVCTFYDFIFL. The Cytoplasmic segment spans residues 2784–2785; it reads DH. The chain crosses the membrane as a helical span at residues 2786-2806; it reads FSLILNSIVFLMVSSSIVFYT. Topologically, residues 2807-2823 are extracellular; it reads ASHVDGTLTSVLFPVFT. Residues 2824–2844 form a helical membrane-spanning segment; the sequence is FVILRISFLQAVVWNILFLIV. Over 2845–2858 the chain is Cytoplasmic; that stretch reads TVARFMLDKKYLPP. The chain crosses the membrane as a helical span at residues 2859–2879; it reads LNFVHYIPLFIGIDVFVAFVG. Residues 2880–2903 lie on the Extracellular side of the membrane; sequence YRLEYNQRKSFLLDYSVDASRRKQ. The helical transmembrane segment at 2904 to 2924 threads the bilayer; that stretch reads REILNTMLPSFVVDQMINSEL. The Cytoplasmic segment spans residues 2925 to 3693; that stretch reads NEEGIPTSLK…RTHFYNNKSN (769 aa). One can recognise a Guanylate cyclase 1 domain in the interval 2942-3150; it reads SVIFCDVYEF…DTVNTASRMK (209 aa). 6 disordered regions span residues 3214-3245, 3359-3402, 3456-3475, 3485-3508, 3523-3596, and 3620-3653; these read DVISETGGQNGESRRSTASLPRQLETAGASSG, GQTE…SRFD, SGDEQAAGESSEADHDEVPL, QAREANEQESAKRSGGDAPPHTPT, GCAA…ETEK, and FRRRKPAAPSEAASPSSADTPMDSRVSPTSVDDE. Residues 3383-3402 show a composition bias toward basic and acidic residues; it reads RADRRPAGRREDSRGDSRFD. Composition is skewed to basic and acidic residues over residues 3485–3499, 3529–3541, and 3549–3569; these read QAREANEQESAKRSG, EEEKTAKEGRESE, and TESRDANGQRVSERDASDARE. The segment covering 3626-3637 has biased composition (low complexity); the sequence is AAPSEAASPSSA. Residues 3694-3714 traverse the membrane as a helical segment; that stretch reads INTIEQALIIFLVTFCVQTLT. Topologically, residues 3715–3736 are extracellular; that stretch reads RLALPRFYVVCSHHTINLHVCT. Residues 3737–3757 form a helical membrane-spanning segment; it reads GLYWAVRATYTLAAFVLWMLF. Residues 3758 to 3772 lie on the Cytoplasmic side of the membrane; sequence HYRNRKEVATCLELR. The helical transmembrane segment at 3773–3793 threads the bilayer; that stretch reads WMVFLLNLLFISASCVFALSN. The Extracellular segment spans residues 3794–3895; that stretch reads SWGVCGQQQE…GSDLVTANGR (102 aa). The helical transmembrane segment at 3896 to 3916 threads the bilayer; the sequence is AYTYWLLSDTIELFFYIVILH. The Cytoplasmic portion of the chain corresponds to 3917–3921; sequence HNTGL. The helical transmembrane segment at 3922–3942 threads the bilayer; it reads LFQNCILVDVLLMTMSLTFII. Residues 3943-3950 are Extracellular-facing; sequence TTARETAS. Residues 3951 to 3971 traverse the membrane as a helical segment; sequence TVSTIATFPCYVFFNLVSAYC. Residues 3972–4367 lie on the Cytoplasmic side of the membrane; it reads KEYIDRLTFY…GSTPGSALGS (396 aa). Positions 4024–4159 constitute a Guanylate cyclase 2 domain; that stretch reads TFLFADICGF…MDVLTGNMME (136 aa). Mg(2+) is bound by residues Asp4029, Ile4030, and Asp4073. A disordered region spans residues 4292 to 4367; it reads ASHGDSGPSD…GSTPGSALGS (76 aa). A compositionally biased stretch (basic and acidic residues) spans 4333–4344; sequence DGLKQLRKEIER. The span at 4356-4367 shows a compositional bias: polar residues; it reads DIGSTPGSALGS.

It in the N-terminal section; belongs to the cation transport ATPase (P-type) (TC 3.A.3) family. Type IV subfamily. In the C-terminal section; belongs to the adenylyl cyclase class-4/guanylyl cyclase family. In terms of assembly, interacts with chaperone CDC50.1; the interaction regulates guanylate cyclase GC trafficking and sensing environmental changes. Interacts with UGO; the interaction regulates guanylate cyclase GC trafficking and catalytic activity. Mg(2+) serves as cofactor. The cofactor is Mn(2+).

The protein resides in the cell membrane. The catalysed reaction is GTP = 3',5'-cyclic GMP + diphosphate. Functionally, catalyzes the synthesis of the second messenger cGMP from GTP. During the tachyzoite lytic growth cycle in host cells, detects and transduces environmental changes in potassium, phosphatidic acid and pH levels. By producing cGMP in response to these environmental changes, activates PKG and thereby regulates PKG-dependent microneme secretion which is essential for tachyzoite motility, host cell attachment invasion of and egress from host cells. May play a role in the fission of connected tachyzoites at their basal pole during egress. Does not display flippase activity towards phosphatidylserine, phosphatidic acid or phosphatidylcholine. This is Guanylate cyclase from Toxoplasma gondii (strain ATCC 50853 / GT1).